We begin with the raw amino-acid sequence, 623 residues long: Adenine deaminase 2 (623 aa).

It belongs to the metallo-dependent hydrolases superfamily. Adenine deaminase family. Requires Mn(2+) as cofactor.

The catalysed reaction is adenine + H2O + H(+) = hypoxanthine + NH4(+). This Jannaschia sp. (strain CCS1) protein is Adenine deaminase 2.